Here is a 741-residue protein sequence, read N- to C-terminus: Nuclear pore complex protein Nup88 (741 aa).

Residue alanine 2 is modified to N-acetylalanine. Phosphoserine is present on residues serine 35, serine 50, serine 379, serine 437, serine 442, and serine 517. Threonine 525 carries the phosphothreonine modification. Residue serine 540 is modified to Phosphoserine. The stretch at 585–651 (EEIQRRVKLL…KLLHSFHSEL (67 aa)) forms a coiled coil. Phosphoserine is present on serine 698.

Interacts with NUP214/CAN. Interacts with NUP62 and NUP98. Ubiquitous.

It localises to the nucleus. The protein localises to the nuclear pore complex. In terms of biological role, component of nuclear pore complex. The polypeptide is Nuclear pore complex protein Nup88 (NUP88) (Homo sapiens (Human)).